The chain runs to 92 residues: Small ribosomal subunit protein uS19c (92 aa).

The protein belongs to the universal ribosomal protein uS19 family.

It is found in the plastid. The protein resides in the chloroplast. Its function is as follows. Protein S19 forms a complex with S13 that binds strongly to the 16S ribosomal RNA. The polypeptide is Small ribosomal subunit protein uS19c (Morus indica (Mulberry)).